Consider the following 152-residue polypeptide: UPF0266 membrane protein PM0830 (152 aa).

3 consecutive transmembrane segments (helical) span residues 1–21 (MMII…YAFY), 45–65 (KDAL…YTNL), and 66–86 (SSAT…AAFI).

Belongs to the UPF0266 family.

The protein localises to the cell inner membrane. The chain is UPF0266 membrane protein PM0830 from Pasteurella multocida (strain Pm70).